A 633-amino-acid polypeptide reads, in one-letter code: Pesticidal crystal protein Cry2Aa (633 aa).

Belongs to the delta endotoxin family.

Functionally, promotes colloidosmotic lysis by binding to the midgut epithelial cells of both dipteran (Aedes aegypti) and lepidopteran (Manduca sexta) larvae. This chain is Pesticidal crystal protein Cry2Aa (cry2Aa), found in Bacillus thuringiensis subsp. kenyae.